The sequence spans 115 residues: MTLDPQIAARLKRNADGLVTAVVQERGSKDVLMVAWMDDAALARTLETREATYYSRSRGQQWVKGETSGHTQYVHSVRLDCDGDTVLLTVDQVGGACHTGDHSCFDADVLLHPQD.

Asp-80 lines the Mg(2+) pocket. Residue Cys-81 participates in Zn(2+) binding. Positions 82 and 84 each coordinate Mg(2+). Zn(2+)-binding residues include Cys-97 and Cys-104.

This sequence belongs to the PRA-CH family. Homodimer. The cofactor is Mg(2+). Zn(2+) serves as cofactor.

The protein resides in the cytoplasm. The enzyme catalyses 1-(5-phospho-beta-D-ribosyl)-5'-AMP + H2O = 1-(5-phospho-beta-D-ribosyl)-5-[(5-phospho-beta-D-ribosylamino)methylideneamino]imidazole-4-carboxamide. It functions in the pathway amino-acid biosynthesis; L-histidine biosynthesis; L-histidine from 5-phospho-alpha-D-ribose 1-diphosphate: step 3/9. Functionally, catalyzes the hydrolysis of the adenine ring of phosphoribosyl-AMP. In Mycolicibacterium paratuberculosis (strain ATCC BAA-968 / K-10) (Mycobacterium paratuberculosis), this protein is Phosphoribosyl-AMP cyclohydrolase.